The primary structure comprises 70 residues: UPF0150 protein TM_1311 (70 aa).

This sequence belongs to the UPF0150 family.

The protein is UPF0150 protein TM_1311 of Thermotoga maritima (strain ATCC 43589 / DSM 3109 / JCM 10099 / NBRC 100826 / MSB8).